A 474-amino-acid polypeptide reads, in one-letter code: 1-aminocyclopropane-1-carboxylate synthase 4 (474 aa).

Residues glutamate 47 and tyrosine 85 each contribute to the substrate site. The residue at position 273 (lysine 273) is an N6-(pyridoxal phosphate)lysine.

The protein belongs to the class-I pyridoxal-phosphate-dependent aminotransferase family. In terms of assembly, homodimer and heterodimer. In vivo, the relevance of heterodimerization with other ACS enzymes is however unsure. Interacts with XBAT32. Interacts (via its C-terminal region) with ETO1 and EOL1. It depends on pyridoxal 5'-phosphate as a cofactor. Ubiquitinated by XBAT32. Ubiquitination probably leads to its subsequent degradation, thus controlling ethylene production. In terms of tissue distribution, expressed in roots, leaves and flowers.

The enzyme catalyses S-adenosyl-L-methionine = 1-aminocyclopropane-1-carboxylate + S-methyl-5'-thioadenosine + H(+). It functions in the pathway alkene biosynthesis; ethylene biosynthesis via S-adenosyl-L-methionine; ethylene from S-adenosyl-L-methionine: step 1/2. Its function is as follows. 1-aminocyclopropane-1-carboxylate synthase (ACS) enzymes catalyze the conversion of S-adenosyl-L-methionine (SAM) into 1-aminocyclopropane-1-carboxylate (ACC), a direct precursor of ethylene. The chain is 1-aminocyclopropane-1-carboxylate synthase 4 (ACS4) from Arabidopsis thaliana (Mouse-ear cress).